The sequence spans 496 residues: Glutamate--tRNA ligase (496 aa).

Positions 11 to 21 (PSPTGLLHIGN) match the 'HIGH' region motif. Positions 255 to 259 (KLSKR) match the 'KMSKS' region motif. Lys-258 lines the ATP pocket.

This sequence belongs to the class-I aminoacyl-tRNA synthetase family. Glutamate--tRNA ligase type 1 subfamily. As to quaternary structure, monomer.

It is found in the cytoplasm. It carries out the reaction tRNA(Glu) + L-glutamate + ATP = L-glutamyl-tRNA(Glu) + AMP + diphosphate. In terms of biological role, catalyzes the attachment of glutamate to tRNA(Glu) in a two-step reaction: glutamate is first activated by ATP to form Glu-AMP and then transferred to the acceptor end of tRNA(Glu). In Streptococcus pyogenes serotype M49 (strain NZ131), this protein is Glutamate--tRNA ligase.